We begin with the raw amino-acid sequence, 294 residues long: ATP synthase gamma chain (294 aa).

This sequence belongs to the ATPase gamma chain family. F-type ATPases have 2 components, CF(1) - the catalytic core - and CF(0) - the membrane proton channel. CF(1) has five subunits: alpha(3), beta(3), gamma(1), delta(1), epsilon(1). CF(0) has three main subunits: a, b and c.

The protein resides in the cell membrane. In terms of biological role, produces ATP from ADP in the presence of a proton gradient across the membrane. The gamma chain is believed to be important in regulating ATPase activity and the flow of protons through the CF(0) complex. The polypeptide is ATP synthase gamma chain (Ruminiclostridium cellulolyticum (strain ATCC 35319 / DSM 5812 / JCM 6584 / H10) (Clostridium cellulolyticum)).